A 473-amino-acid polypeptide reads, in one-letter code: N-lysine methyltransferase SETD6 (473 aa).

Position 39 is an N6-methylated lysine; by autocatalysis (K39). Residues 60-286 (PPAQVAVSRQ…KGHEIFNTYG (227 aa)) enclose the SET domain. 73–75 (AGY) is an S-adenosyl-L-methionine binding site. W122 contributes to the substrate binding site. Position 179 is an N6-methylated lysine; by autocatalysis (K179). Residue Y223 coordinates S-adenosyl-L-methionine. Residues S224 and Q226 each coordinate substrate. 251-252 (NH) lines the S-adenosyl-L-methionine pocket. Residues Y262 and Y297 each contribute to the substrate site. Y297 lines the S-adenosyl-L-methionine pocket. K372 is modified (N6-methylated lysine; by autocatalysis).

It belongs to the class V-like SAM-binding methyltransferase superfamily. Histone-lysine methyltransferase family. SETD6 subfamily. Monomer, homodimer and homotrimer; these structures are stabilized in the presence of S-adenosyl-L-methionine (SAM). Post-translationally, automethylated; Lys-39 and Lys-179 serve as the major automethylation sites.

It localises to the nucleus. It carries out the reaction L-lysyl-[protein] + S-adenosyl-L-methionine = N(6)-methyl-L-lysyl-[protein] + S-adenosyl-L-homocysteine + H(+). It catalyses the reaction L-lysyl(8)-[histone H2AZ] + S-adenosyl-L-methionine = N(6)-methyl-L-lysyl(8)-[histone H2AZ] + S-adenosyl-L-homocysteine + H(+). Activated by automethylation. Protein-lysine N-methyltransferase. Monomethylates 'Lys-310' of the RELA subunit of NF-kappa-B complex, leading to down-regulation of NF-kappa-B transcription factor activity. Monomethylates 'Lys-8' of H2AZ (H2AZK8me1). Required for the maintenance of embryonic stem cell self-renewal. Methylates PAK4. This chain is N-lysine methyltransferase SETD6, found in Homo sapiens (Human).